A 450-amino-acid polypeptide reads, in one-letter code: Enolase (450 aa).

Glutamine 173 contacts (2R)-2-phosphoglycerate. Glutamate 215 acts as the Proton donor in catalysis. Mg(2+) contacts are provided by aspartate 254, glutamate 308, and aspartate 335. (2R)-2-phosphoglycerate-binding residues include lysine 360, arginine 389, serine 390, and lysine 411. The active-site Proton acceptor is the lysine 360.

The protein belongs to the enolase family. Mg(2+) is required as a cofactor.

Its subcellular location is the cytoplasm. It is found in the secreted. The protein localises to the cell surface. The catalysed reaction is (2R)-2-phosphoglycerate = phosphoenolpyruvate + H2O. The protein operates within carbohydrate degradation; glycolysis; pyruvate from D-glyceraldehyde 3-phosphate: step 4/5. Functionally, catalyzes the reversible conversion of 2-phosphoglycerate (2-PG) into phosphoenolpyruvate (PEP). It is essential for the degradation of carbohydrates via glycolysis. The sequence is that of Enolase from Malacoplasma penetrans (strain HF-2) (Mycoplasma penetrans).